The chain runs to 240 residues: Cysteine-rich secretory protein (240 aa).

Residues 1-19 form the signal peptide; the sequence is MIAFIVLPILAAVLQQSSG. Residues 38–166 enclose the SCP domain; the sequence is VDLHNSLRRS…EYSYFYVCQY (129 aa). 8 disulfide bridges follow: Cys75/Cys153, Cys92/Cys167, Cys148/Cys164, Cys186/Cys193, Cys189/Cys198, Cys202/Cys235, Cys211/Cys229, and Cys220/Cys233. One can recognise a ShKT domain in the interval 202 to 235; it reads CTKEDKYSNCKSLVQQAGCQDKQMQSDCSAICFC.

The protein belongs to the CRISP family. As to expression, expressed by the venom gland.

Its subcellular location is the secreted. In terms of biological role, weakly blocks contraction of smooth muscle elicited by high potassium-induced depolarization, but does not block caffeine-stimulated contraction. May target voltage-gated calcium channels on smooth muscle. The chain is Cysteine-rich secretory protein from Crotalus adamanteus (Eastern diamondback rattlesnake).